The sequence spans 358 residues: 3-dehydroquinate synthase (358 aa).

NAD(+)-binding positions include 72–77, 106–110, 130–131, Lys143, and Lys151; these read GGERVK, GALLD, and ST. Positions 184, 245, and 261 each coordinate Zn(2+).

This sequence belongs to the sugar phosphate cyclases superfamily. Dehydroquinate synthase family. NAD(+) is required as a cofactor. The cofactor is Co(2+). It depends on Zn(2+) as a cofactor.

The protein resides in the cytoplasm. The enzyme catalyses 7-phospho-2-dehydro-3-deoxy-D-arabino-heptonate = 3-dehydroquinate + phosphate. It participates in metabolic intermediate biosynthesis; chorismate biosynthesis; chorismate from D-erythrose 4-phosphate and phosphoenolpyruvate: step 2/7. Catalyzes the conversion of 3-deoxy-D-arabino-heptulosonate 7-phosphate (DAHP) to dehydroquinate (DHQ). The sequence is that of 3-dehydroquinate synthase (aroB) from Aeropyrum pernix (strain ATCC 700893 / DSM 11879 / JCM 9820 / NBRC 100138 / K1).